Here is a 303-residue protein sequence, read N- to C-terminus: Pseudouridine-5'-phosphate glycosidase (303 aa).

E26 functions as the Proton donor in the catalytic mechanism. Positions 87 and 107 each coordinate substrate. Residue D139 coordinates Mn(2+). Position 141-143 (141-143) interacts with substrate; that stretch reads SAD. K160 serves as the catalytic Nucleophile.

It belongs to the pseudouridine-5'-phosphate glycosidase family. As to quaternary structure, homotrimer. Mn(2+) serves as cofactor.

It carries out the reaction D-ribose 5-phosphate + uracil = psi-UMP + H2O. Its function is as follows. Catalyzes the reversible cleavage of pseudouridine 5'-phosphate (PsiMP) to ribose 5-phosphate and uracil. Functions biologically in the cleavage direction, as part of a pseudouridine degradation pathway. In Saccharopolyspora erythraea (strain ATCC 11635 / DSM 40517 / JCM 4748 / NBRC 13426 / NCIMB 8594 / NRRL 2338), this protein is Pseudouridine-5'-phosphate glycosidase.